A 445-amino-acid polypeptide reads, in one-letter code: Protein cereblon (445 aa).

Residues 1 to 50 form a disordered region; it reads MAAEEGGDGRRNMGNPPPPAPAESEEEDDNEMEVEDQDGKEAEKPNMINF. A compositionally biased stretch (acidic residues) spans 23-36; it reads ESEEEDDNEMEVED. The Lon N-terminal domain occupies 82 to 321; that stretch reads IPVLPHVMVM…CELDIMNKCT (240 aa). The region spanning 320–428 is the CULT domain; it reads CTSLCCKQCQ…LTRSALLPRI (109 aa). The Zn(2+) site is built by cysteine 325 and cysteine 328. Residues histidine 380, tryptophan 382, and tryptophan 388 each contribute to the (S)-thalidomide site. Residues cysteine 393 and cysteine 396 each contribute to the Zn(2+) site.

Belongs to the CRBN family. In terms of assembly, component of a DCX (DDB1-CUL4-X-box) protein ligase complex. Interacts directly with DDB1.

It localises to the cytoplasm. Its subcellular location is the nucleus. It functions in the pathway protein modification; protein ubiquitination. Substrate recognition component of a DCX (DDB1-CUL4-X-box) E3 protein ligase complex that mediates the ubiquitination and subsequent proteasomal degradation of target proteins, such as MEIS2. Normal degradation of key regulatory proteins is required for normal limb outgrowth and expression of the fibroblast growth factor FGF8. Maintains presynaptic glutamate release and consequently cognitive functions, such as memory and learning, by negatively regulating large-conductance calcium-activated potassium (BK) channels in excitatory neurons. Likely to function by regulating the assembly and neuronal surface expression of BK channels via its interaction with KCNT1. May also be involved in regulating anxiety-like behaviors via a BK channel-independent mechanism. This is Protein cereblon (CRBN) from Gallus gallus (Chicken).